Reading from the N-terminus, the 214-residue chain is Probable transaldolase (214 aa).

Catalysis depends on Lys-83, which acts as the Schiff-base intermediate with substrate.

The protein belongs to the transaldolase family. Type 3B subfamily.

Its subcellular location is the cytoplasm. It carries out the reaction D-sedoheptulose 7-phosphate + D-glyceraldehyde 3-phosphate = D-erythrose 4-phosphate + beta-D-fructose 6-phosphate. The protein operates within carbohydrate degradation; pentose phosphate pathway; D-glyceraldehyde 3-phosphate and beta-D-fructose 6-phosphate from D-ribose 5-phosphate and D-xylulose 5-phosphate (non-oxidative stage): step 2/3. Functionally, transaldolase is important for the balance of metabolites in the pentose-phosphate pathway. In Streptococcus equi subsp. zooepidemicus (strain H70), this protein is Probable transaldolase.